The sequence spans 328 residues: Aspartate carbamoyltransferase catalytic subunit (328 aa).

Carbamoyl phosphate is bound by residues Arg-70 and Thr-71. Lys-98 is a binding site for L-aspartate. Residues Arg-120, His-150, and Gln-153 each contribute to the carbamoyl phosphate site. Residues Arg-183 and Arg-238 each contribute to the L-aspartate site. Positions 279 and 280 each coordinate carbamoyl phosphate.

It belongs to the aspartate/ornithine carbamoyltransferase superfamily. ATCase family. As to quaternary structure, heterododecamer (2C3:3R2) of six catalytic PyrB chains organized as two trimers (C3), and six regulatory PyrI chains organized as three dimers (R2).

It carries out the reaction carbamoyl phosphate + L-aspartate = N-carbamoyl-L-aspartate + phosphate + H(+). It functions in the pathway pyrimidine metabolism; UMP biosynthesis via de novo pathway; (S)-dihydroorotate from bicarbonate: step 2/3. Its function is as follows. Catalyzes the condensation of carbamoyl phosphate and aspartate to form carbamoyl aspartate and inorganic phosphate, the committed step in the de novo pyrimidine nucleotide biosynthesis pathway. The chain is Aspartate carbamoyltransferase catalytic subunit from Methylococcus capsulatus (strain ATCC 33009 / NCIMB 11132 / Bath).